Here is a 53-residue protein sequence, read N- to C-terminus: uncharacterized protein (53 aa).

A helical transmembrane segment spans residues 26-46 (CYLLFCFLECFLNLFKKCGVF).

It belongs to the plectrovirus ORF11 family.

The protein localises to the host membrane. This is an uncharacterized protein from Spiroplasma virus SpV1-R8A2 B (SpV1).